The sequence spans 283 residues: Malonyl-[acyl-carrier protein] O-methyltransferase (283 aa).

Belongs to the methyltransferase superfamily.

It catalyses the reaction malonyl-[ACP] + S-adenosyl-L-methionine = malonyl-[ACP] methyl ester + S-adenosyl-L-homocysteine. Its pathway is cofactor biosynthesis; biotin biosynthesis. Functionally, converts the free carboxyl group of a malonyl-thioester to its methyl ester by transfer of a methyl group from S-adenosyl-L-methionine (SAM). It allows to synthesize pimeloyl-ACP via the fatty acid synthetic pathway. The chain is Malonyl-[acyl-carrier protein] O-methyltransferase from Acetivibrio thermocellus (strain ATCC 27405 / DSM 1237 / JCM 9322 / NBRC 103400 / NCIMB 10682 / NRRL B-4536 / VPI 7372) (Clostridium thermocellum).